The sequence spans 282 residues: Bifunctional protein FolD (282 aa).

NADP(+) contacts are provided by residues 164-166 (GRS) and Ser189.

Belongs to the tetrahydrofolate dehydrogenase/cyclohydrolase family. In terms of assembly, homodimer.

It carries out the reaction (6R)-5,10-methylene-5,6,7,8-tetrahydrofolate + NADP(+) = (6R)-5,10-methenyltetrahydrofolate + NADPH. It catalyses the reaction (6R)-5,10-methenyltetrahydrofolate + H2O = (6R)-10-formyltetrahydrofolate + H(+). The protein operates within one-carbon metabolism; tetrahydrofolate interconversion. Functionally, catalyzes the oxidation of 5,10-methylenetetrahydrofolate to 5,10-methenyltetrahydrofolate and then the hydrolysis of 5,10-methenyltetrahydrofolate to 10-formyltetrahydrofolate. This chain is Bifunctional protein FolD, found in Anaeromyxobacter dehalogenans (strain 2CP-C).